A 103-amino-acid polypeptide reads, in one-letter code: MLLTTTDVLQGREVERYLGIVTAEVVYGTNVLRDFLATLRNIIGGRTRTYEEVFENAQKKVLEELEQRAKRLGANGILGVSIHTNMSTTMILVTAAGTAVKLR.

The protein belongs to the UPF0145 family.

In Synechococcus sp. (strain JA-2-3B'a(2-13)) (Cyanobacteria bacterium Yellowstone B-Prime), this protein is UPF0145 protein CYB_1351.